The chain runs to 380 residues: Flap endonuclease 1 (380 aa).

Positions 1–104 (MGIQGLAKLI…GELAKRSERR (104 aa)) are N-domain. The residue at position 19 (Arg19) is a Symmetric dimethylarginine; by PRMT5. Asp34 serves as a coordination point for Mg(2+). DNA-binding residues include Arg47 and Arg70. Lys80 bears the N6-acetyllysine mark. Asp86 serves as a coordination point for Mg(2+). Arg100 and Arg104 each carry symmetric dimethylarginine; by PRMT5. Residues 122–253 (EVEKFTKRLV…KRAVDLIQKH (132 aa)) form an I-domain region. Glu158, Glu160, Asp179, and Asp181 together coordinate Mg(2+). Position 158 (Glu158) interacts with DNA. Phosphoserine; by CDK2 is present on Ser187. The residue at position 192 (Arg192) is a Symmetric dimethylarginine; by PRMT5. Position 197 is a phosphoserine (Ser197). The DNA site is built by Gly231 and Asp233. Asp233 serves as a coordination point for Mg(2+). Phosphoserine is present on residues Ser255, Ser293, and Ser335. The disordered stretch occupies residues 327 to 380 (RLSKSRQGSTQGRLDDFFKVTGSLSSAKRKEPEPKGAAKKKAKTGAAGKFKRGK). Thr336 is modified (phosphothreonine). The interval 336–344 (TQGRLDDFF) is interaction with PCNA. Residues Lys354, Lys375, Lys377, and Lys380 each carry the N6-acetyllysine modification. A compositionally biased stretch (basic residues) spans 363–380 (AAKKKAKTGAAGKFKRGK).

The protein belongs to the XPG/RAD2 endonuclease family. FEN1 subfamily. Interacts with PCNA. Three molecules of FEN1 bind to one PCNA trimer with each molecule binding to one PCNA monomer. PCNA stimulates the nuclease activity without altering cleavage specificity. The C-terminal domain binds EP300; can bind simultaneously to both PCNA and EP300. Interacts with DDX11; this interaction is direct and increases flap endonuclease activity of FEN1. Interacts with WDR4; regulating its endonuclease activity. Interacts with POLB. Mg(2+) is required as a cofactor. Post-translationally, acetylated by EP300. Acetylation inhibits both endonuclease and exonuclease activity. Acetylation also reduces DNA-binding activity but does not affect interaction with PCNA or EP300. Phosphorylation upon DNA damage induces relocalization to the nuclear plasma. Phosphorylation at Ser-187 by CDK2 occurs during late S-phase and results in dissociation from PCNA. In terms of processing, methylation at Arg-192 by PRMT5 impedes Ser-187 phosphorylation and increases interaction with PCNA.

It localises to the nucleus. Its subcellular location is the nucleolus. The protein resides in the nucleoplasm. It is found in the mitochondrion. Its function is as follows. Structure-specific nuclease with 5'-flap endonuclease and 5'-3' exonuclease activities involved in DNA replication and repair. During DNA replication, cleaves the 5'-overhanging flap structure that is generated by displacement synthesis when DNA polymerase encounters the 5'-end of a downstream Okazaki fragment. It enters the flap from the 5'-end and then tracks to cleave the flap base, leaving a nick for ligation. Also involved in the long patch base excision repair (LP-BER) pathway, by cleaving within the apurinic/apyrimidinic (AP) site-terminated flap. Acts as a genome stabilization factor that prevents flaps from equilibrating into structures that lead to duplications and deletions. Also possesses 5'-3' exonuclease activity on nicked or gapped double-stranded DNA, and exhibits RNase H activity. Also involved in replication and repair of rDNA and in repairing mitochondrial DNA. The polypeptide is Flap endonuclease 1 (Bos taurus (Bovine)).